The chain runs to 308 residues: Cytochrome c biogenesis protein CcsA (308 aa).

A run of 7 helical transmembrane segments spans residues 2–22 (IVSTLEHILTHISLSIVSILI), 44–64 (GMLITFLCITGLLANNWIYLG), 71–91 (LSESLIFLSWSFALIHSIGYF), 143–163 (MILGYAALLCGSLLSVALMVI), 212–232 (VISLGFIFLTIGILSGAVWAN), 247–267 (WAFITWIVFAIYLHTRININL), and 273–293 (AIVASLGFIIIWICYFGVNLV).

It belongs to the CcmF/CycK/Ccl1/NrfE/CcsA family. In terms of assembly, may interact with Ccs1.

The protein resides in the plastid membrane. In terms of biological role, required during biogenesis of c-type cytochromes (cytochrome c6 and cytochrome f) at the step of heme attachment. The chain is Cytochrome c biogenesis protein CcsA from Cuscuta reflexa (Southern Asian dodder).